A 104-amino-acid chain; its full sequence is Inclusion membrane protein F (104 aa).

A run of 2 helical transmembrane segments spans residues 39 to 59 (LVVA…SLVA) and 70 to 90 (LAVL…VLFI).

The protein resides in the secreted. It localises to the host vacuole. The protein localises to the host pathogen-containing vacuole. It is found in the host pathogen-containing vacuole membrane. In terms of biological role, inclusion membrane protein probably involved in early modification events of the chlamydial inclusion. The sequence is that of Inclusion membrane protein F (incF) from Chlamydia trachomatis serovar D (strain ATCC VR-885 / DSM 19411 / UW-3/Cx).